The primary structure comprises 144 residues: Ferredoxin-thioredoxin reductase catalytic chain, chloroplastic (144 aa).

A chloroplast-targeting transit peptide spans 1–31 (MTTQASTFAVAVPSVATPFRRHRNPFVVRAQ). Position 83 (Cys-83) interacts with [4Fe-4S] cluster. Cys-85 functions as the Nucleophile in the catalytic mechanism. Cys-85 and Cys-115 are joined by a disulfide. [4Fe-4S] cluster is bound by residues Cys-102, Cys-104, and Cys-113.

Belongs to the ferredoxin thioredoxin reductase beta subunit family. In terms of assembly, heterodimer of subunit A (variable subunit) and subunit B (catalytic subunit). Heterodimeric FTR forms a complex with ferredoxin and thioredoxin. [4Fe-4S] cluster is required as a cofactor.

It is found in the plastid. It localises to the chloroplast. It carries out the reaction [thioredoxin]-disulfide + 2 reduced [2Fe-2S]-[ferredoxin] + 2 H(+) = [thioredoxin]-dithiol + 2 oxidized [2Fe-2S]-[ferredoxin]. Catalytic subunit of the ferredoxin-thioredoxin reductase (FTR), which catalyzes the two-electron reduction of thioredoxins by the electrons provided by reduced ferredoxin. This is Ferredoxin-thioredoxin reductase catalytic chain, chloroplastic (FTRC) from Glycine max (Soybean).